The following is a 338-amino-acid chain: Methionyl-tRNA formyltransferase (338 aa).

110 to 113 (SLLP) contacts (6S)-5,6,7,8-tetrahydrofolate.

It belongs to the Fmt family.

It catalyses the reaction L-methionyl-tRNA(fMet) + (6R)-10-formyltetrahydrofolate = N-formyl-L-methionyl-tRNA(fMet) + (6S)-5,6,7,8-tetrahydrofolate + H(+). In terms of biological role, attaches a formyl group to the free amino group of methionyl-tRNA(fMet). The formyl group appears to play a dual role in the initiator identity of N-formylmethionyl-tRNA by promoting its recognition by IF2 and preventing the misappropriation of this tRNA by the elongation apparatus. This is Methionyl-tRNA formyltransferase from Parasynechococcus marenigrum (strain WH8102).